Reading from the N-terminus, the 841-residue chain is Follistatin-related protein 4 (841 aa).

The first 22 residues, 1–22, serve as a signal peptide directing secretion; sequence MKPGGFWPHLALLGVSLPAVLG. Residues 29-54 form a disordered region; that stretch reads SRSPNMVPGESQAEETRGFEVTRREG. Residues 42–54 show a composition bias toward basic and acidic residues; sequence EETRGFEVTRREG. The Kazal-like domain occupies 80–134; it reads TTGQPSCQCLEVCRPRYMPVCGSDGRLYGNHCELRRAACLLGKRIVSVHSKDCFL. 3 disulfides stabilise this stretch: Cys-86/Cys-118, Cys-92/Cys-111, and Cys-100/Cys-132. EF-hand domains lie at 173–208 and 225–247; these read QKRLLVESLFKDLDADGNGHLGSLELAQYVLKEQDM and DYNSDGSLTLGEFYTAFQVIQLS. Residues Asp-186, Asp-188, Asn-190, His-192, Glu-197, Asp-225, Asn-227, Asp-229, Ser-231, and Glu-236 each coordinate Ca(2+). 2 Ig-like domains span residues 250-336 and 340-425; these read PEDK…VLQV and PVIR…EDIS. 2 cysteine pairs are disulfide-bonded: Cys-269-Cys-320 and Cys-361-Cys-412. Asn-317 is a glycosylation site (N-linked (GlcNAc...) asparagine).

The protein resides in the secreted. This is Follistatin-related protein 4 (Fstl4) from Mus musculus (Mouse).